The primary structure comprises 167 residues: Endoribonuclease YbeY (167 aa).

Residues H131, H135, and H141 each contribute to the Zn(2+) site.

This sequence belongs to the endoribonuclease YbeY family. Zn(2+) is required as a cofactor.

The protein resides in the cytoplasm. Functionally, single strand-specific metallo-endoribonuclease involved in late-stage 70S ribosome quality control and in maturation of the 3' terminus of the 16S rRNA. The sequence is that of Endoribonuclease YbeY from Rickettsia rickettsii (strain Iowa).